Consider the following 284-residue polypeptide: Nucleotide-binding protein Sputw3181_3461 (284 aa).

ATP is bound at residue 8 to 15 (GRSGSGKS). GTP is bound at residue 56–59 (DVRN).

The protein belongs to the RapZ-like family.

Functionally, displays ATPase and GTPase activities. In Shewanella sp. (strain W3-18-1), this protein is Nucleotide-binding protein Sputw3181_3461.